A 512-amino-acid chain; its full sequence is GMP synthase [glutamine-hydrolyzing] (512 aa).

Positions threonine 7–glycine 197 constitute a Glutamine amidotransferase type-1 domain. Cysteine 84 (nucleophile) is an active-site residue. Residues histidine 171 and glutamate 173 contribute to the active site. In terms of domain architecture, GMPS ATP-PPase spans tryptophan 198–arginine 387. Position 225-231 (serine 225–serine 231) interacts with ATP.

In terms of assembly, homodimer.

It carries out the reaction XMP + L-glutamine + ATP + H2O = GMP + L-glutamate + AMP + diphosphate + 2 H(+). It functions in the pathway purine metabolism; GMP biosynthesis; GMP from XMP (L-Gln route): step 1/1. Its function is as follows. Catalyzes the synthesis of GMP from XMP. In Bacillus cereus (strain ATCC 10987 / NRS 248), this protein is GMP synthase [glutamine-hydrolyzing].